The chain runs to 201 residues: Holliday junction branch migration complex subunit RuvA (201 aa).

The interval 1 to 63 (MIASVRGEVL…EDSMTLYGFA (63 aa)) is domain I. Residues 64–142 (DTEARDLFGL…LVPVQAGPPG (79 aa)) form a domain II region. A flexible linker region spans residues 143-153 (STPAVAATPVR). A domain III region spans residues 153 to 201 (REQVVEALTGLGFPLKQAEQALDTVLAEQPAADTSTALRAALSLLGKNR).

The protein belongs to the RuvA family. Homotetramer. Forms an RuvA(8)-RuvB(12)-Holliday junction (HJ) complex. HJ DNA is sandwiched between 2 RuvA tetramers; dsDNA enters through RuvA and exits via RuvB. An RuvB hexamer assembles on each DNA strand where it exits the tetramer. Each RuvB hexamer is contacted by two RuvA subunits (via domain III) on 2 adjacent RuvB subunits; this complex drives branch migration. In the full resolvosome a probable DNA-RuvA(4)-RuvB(12)-RuvC(2) complex forms which resolves the HJ.

The protein resides in the cytoplasm. Its function is as follows. The RuvA-RuvB-RuvC complex processes Holliday junction (HJ) DNA during genetic recombination and DNA repair, while the RuvA-RuvB complex plays an important role in the rescue of blocked DNA replication forks via replication fork reversal (RFR). RuvA specifically binds to HJ cruciform DNA, conferring on it an open structure. The RuvB hexamer acts as an ATP-dependent pump, pulling dsDNA into and through the RuvAB complex. HJ branch migration allows RuvC to scan DNA until it finds its consensus sequence, where it cleaves and resolves the cruciform DNA. In Nocardia farcinica (strain IFM 10152), this protein is Holliday junction branch migration complex subunit RuvA.